A 95-amino-acid chain; its full sequence is Large ribosomal subunit protein bL21 (95 aa).

It belongs to the bacterial ribosomal protein bL21 family. In terms of assembly, part of the 50S ribosomal subunit. Contacts protein L20.

In terms of biological role, this protein binds to 23S rRNA in the presence of protein L20. The chain is Large ribosomal subunit protein bL21 from Rubrobacter xylanophilus (strain DSM 9941 / JCM 11954 / NBRC 16129 / PRD-1).